Reading from the N-terminus, the 504-residue chain is Anaerobic nitric oxide reductase transcription regulator NorR (504 aa).

Position 57 is a 4-aspartylphosphate (D57). Residues 187–416 (MIGLSPGMTQ…LEHAIHRAVV (230 aa)) enclose the Sigma-54 factor interaction domain. Residues 215-222 (GETGTGKE) and 278-287 (ADNGTLFLDE) each bind ATP. A DNA-binding region (H-T-H motif) is located at residues 479-498 (WAACARMLETDVANLHRLAK).

The protein operates within nitrogen metabolism; nitric oxide reduction. Its function is as follows. Required for the expression of anaerobic nitric oxide (NO) reductase, acts as a transcriptional activator for at least the norVW operon. Activation also requires sigma-54. The polypeptide is Anaerobic nitric oxide reductase transcription regulator NorR (Escherichia coli (strain K12 / MC4100 / BW2952)).